Consider the following 228-residue polypeptide: MQKLKQQVFEANMDLPRYGLVTFTWGNVSAIDRERGLVVIKPSGVAYETMKAADMVVVDMSGKVVEGEYRPSSDTATHLELYRRYPSLGGIVHTHSTHATAWAQAGLAIPALGTTHADYFFGDIPCTRGLSEEEVQGEYELNTGKVIIETLGDAEPLHTPGIVVYQHGPFAWGKDAHDAVHNAVVMEEVAKMAWIARSINPQLNHIDSYLMNKHFMRKHGPNAYYGQK.

Substrate-binding positions include 26–27, 43–44, and 72–73; these read GN, SG, and SS. Residues Asp74, His93, and His95 each coordinate Zn(2+). The active-site Proton donor/acceptor is Asp118. His167 serves as a coordination point for Zn(2+). Tyr225 serves as the catalytic Proton donor/acceptor.

It belongs to the aldolase class II family. AraD/FucA subfamily. Zn(2+) is required as a cofactor.

The catalysed reaction is L-ribulose 5-phosphate = D-xylulose 5-phosphate. Its pathway is cofactor degradation; L-ascorbate degradation; D-xylulose 5-phosphate from L-ascorbate: step 4/4. In terms of biological role, catalyzes the isomerization of L-ribulose 5-phosphate to D-xylulose 5-phosphate. Is involved in the anaerobic L-ascorbate utilization. The chain is L-ribulose-5-phosphate 4-epimerase UlaF from Escherichia coli (strain SMS-3-5 / SECEC).